The primary structure comprises 214 residues: Probable chemoreceptor glutamine deamidase CheD (214 aa).

It belongs to the CheD family.

It carries out the reaction L-glutaminyl-[protein] + H2O = L-glutamyl-[protein] + NH4(+). In terms of biological role, probably deamidates glutamine residues to glutamate on methyl-accepting chemotaxis receptors (MCPs), playing an important role in chemotaxis. This Vibrio vulnificus (strain YJ016) protein is Probable chemoreceptor glutamine deamidase CheD.